We begin with the raw amino-acid sequence, 353 residues long: Photosystem II protein D1 (353 aa).

The residue at position 2 (threonine 2) is an N-acetylthreonine. Phosphothreonine is present on threonine 2. 3 helical membrane-spanning segments follow: residues 29–46 (YIGW…TATS), 118–133 (HFLL…EWEL), and 142–156 (WIAV…AATA). Histidine 118 contacts chlorophyll a. Tyrosine 126 lines the pheophytin a pocket. Residues aspartate 170 and glutamate 189 each coordinate [CaMn4O5] cluster. The helical transmembrane segment at 197-218 (FHMLGVAGVFGGSLFSAMHGSL) threads the bilayer. Histidine 198 contacts chlorophyll a. A quinone-binding positions include histidine 215 and 264 to 265 (SF). Residue histidine 215 participates in Fe cation binding. Position 272 (histidine 272) interacts with Fe cation. Residues 274-288 (FLAAWPVVGIWFTAL) form a helical membrane-spanning segment. Histidine 332, glutamate 333, aspartate 342, and alanine 344 together coordinate [CaMn4O5] cluster. Residues 345–353 (AVEAPSTNG) constitute a propeptide that is removed on maturation.

It belongs to the reaction center PufL/M/PsbA/D family. In terms of assembly, PSII is composed of 1 copy each of membrane proteins PsbA, PsbB, PsbC, PsbD, PsbE, PsbF, PsbH, PsbI, PsbJ, PsbK, PsbL, PsbM, PsbT, PsbX, PsbY, PsbZ, Psb30/Ycf12, at least 3 peripheral proteins of the oxygen-evolving complex and a large number of cofactors. It forms dimeric complexes. The D1/D2 heterodimer binds P680, chlorophylls that are the primary electron donor of PSII, and subsequent electron acceptors. It shares a non-heme iron and each subunit binds pheophytin, quinone, additional chlorophylls, carotenoids and lipids. D1 provides most of the ligands for the Mn4-Ca-O5 cluster of the oxygen-evolving complex (OEC). There is also a Cl(-1) ion associated with D1 and D2, which is required for oxygen evolution. The PSII complex binds additional chlorophylls, carotenoids and specific lipids. is required as a cofactor. In terms of processing, tyr-161 forms a radical intermediate that is referred to as redox-active TyrZ, YZ or Y-Z. Post-translationally, C-terminally processed by CTPA; processing is essential to allow assembly of the oxygen-evolving complex and thus photosynthetic growth.

The protein resides in the plastid. It is found in the chloroplast thylakoid membrane. The catalysed reaction is 2 a plastoquinone + 4 hnu + 2 H2O = 2 a plastoquinol + O2. Photosystem II (PSII) is a light-driven water:plastoquinone oxidoreductase that uses light energy to abstract electrons from H(2)O, generating O(2) and a proton gradient subsequently used for ATP formation. It consists of a core antenna complex that captures photons, and an electron transfer chain that converts photonic excitation into a charge separation. The D1/D2 (PsbA/PsbD) reaction center heterodimer binds P680, the primary electron donor of PSII as well as several subsequent electron acceptors. The sequence is that of Photosystem II protein D1 from Drimys granadensis.